A 381-amino-acid polypeptide reads, in one-letter code: Alkanesulfonate monooxygenase (381 aa).

This sequence belongs to the SsuD family. In terms of assembly, homotetramer.

The enzyme catalyses an alkanesulfonate + FMNH2 + O2 = an aldehyde + FMN + sulfite + H2O + 2 H(+). Catalyzes the desulfonation of aliphatic sulfonates. The protein is Alkanesulfonate monooxygenase of Escherichia coli O7:K1 (strain IAI39 / ExPEC).